Reading from the N-terminus, the 155-residue chain is Protein-export protein SecB (155 aa).

The protein belongs to the SecB family. In terms of assembly, homotetramer, a dimer of dimers. One homotetramer interacts with 1 SecA dimer.

The protein resides in the cytoplasm. Its function is as follows. One of the proteins required for the normal export of preproteins out of the cell cytoplasm. It is a molecular chaperone that binds to a subset of precursor proteins, maintaining them in a translocation-competent state. It also specifically binds to its receptor SecA. In Methylococcus capsulatus (strain ATCC 33009 / NCIMB 11132 / Bath), this protein is Protein-export protein SecB.